We begin with the raw amino-acid sequence, 141 residues long: Hemoglobin subunit alpha-D (141 aa).

In terms of domain architecture, Globin spans 1-141; it reads VLTHEDCELL…VGDMLAEKYR (141 aa). Residues His-58 and His-87 each coordinate heme b.

This sequence belongs to the globin family. As to quaternary structure, there are three forms of hemoglobin in Sphenodon: A, A' and D. Hb A is a tetramer of two alpha-A and two beta-1, Hb A' is a tetramer of two alpha-a and two beta-2, Hb D is a tetramer of two alpha-D and two beta-2. Red blood cells.

Involved in oxygen transport from the lung to the various peripheral tissues. The polypeptide is Hemoglobin subunit alpha-D (HBAD) (Sphenodon punctatus (Tuatara)).